The following is an 87-amino-acid chain: Small ribosomal subunit protein bS20 (87 aa).

The tract at residues 1 to 26 is disordered; sequence MANHKSAIKRHKQSQKRAARNRAAKT.

Belongs to the bacterial ribosomal protein bS20 family.

Its function is as follows. Binds directly to 16S ribosomal RNA. This is Small ribosomal subunit protein bS20 from Nitratidesulfovibrio vulgaris (strain DSM 19637 / Miyazaki F) (Desulfovibrio vulgaris).